We begin with the raw amino-acid sequence, 496 residues long: Chaperone SurA (496 aa).

The N-terminal stretch at 1–42 (MACKSTAVRSATRVAPTRRLGMVTGALVALMAGAALLPAAHA) is a signal peptide. A disordered region spans residues 53–80 (RGIFTTPDASPSQPLLRGTLPGPSTASG). 2 consecutive PpiC domains span residues 235–337 (VQEY…KLVD) and 349–447 (VAQT…QVEG).

The protein localises to the periplasm. It carries out the reaction [protein]-peptidylproline (omega=180) = [protein]-peptidylproline (omega=0). In terms of biological role, chaperone involved in the correct folding and assembly of outer membrane proteins. Recognizes specific patterns of aromatic residues and the orientation of their side chains, which are found more frequently in integral outer membrane proteins. May act in both early periplasmic and late outer membrane-associated steps of protein maturation. This is Chaperone SurA from Ralstonia nicotianae (strain ATCC BAA-1114 / GMI1000) (Ralstonia solanacearum).